The chain runs to 121 residues: Large ribosomal subunit protein uL14 (121 aa).

This sequence belongs to the universal ribosomal protein uL14 family. Part of the 50S ribosomal subunit. Forms a cluster with proteins L3 and L19. In the 70S ribosome, L14 and L19 interact and together make contacts with the 16S rRNA in bridges B5 and B8.

Binds to 23S rRNA. Forms part of two intersubunit bridges in the 70S ribosome. The protein is Large ribosomal subunit protein uL14 of Bacteroides fragilis (strain ATCC 25285 / DSM 2151 / CCUG 4856 / JCM 11019 / LMG 10263 / NCTC 9343 / Onslow / VPI 2553 / EN-2).